Reading from the N-terminus, the 448-residue chain is Homogentisate 1,2-dioxygenase (448 aa).

Residue histidine 303 is the Proton acceptor of the active site. Fe cation is bound by residues histidine 346 and glutamate 352. Tyrosine 361 and histidine 382 together coordinate homogentisate. A Fe cation-binding site is contributed by histidine 382.

Belongs to the homogentisate dioxygenase family. As to quaternary structure, hexamer; dimer of trimers. Fe cation serves as cofactor.

The catalysed reaction is homogentisate + O2 = 4-maleylacetoacetate + H(+). The protein operates within amino-acid degradation; L-phenylalanine degradation; acetoacetate and fumarate from L-phenylalanine: step 4/6. Its function is as follows. Involved in the catabolism of homogentisate (2,5-dihydroxyphenylacetate or 2,5-OH-PhAc), a central intermediate in the degradation of phenylalanine and tyrosine. Catalyzes the oxidative ring cleavage of the aromatic ring of homogentisate to yield maleylacetoacetate. The chain is Homogentisate 1,2-dioxygenase from Rhodopseudomonas palustris (strain TIE-1).